The sequence spans 121 residues: MSAVAENIQTEMPAPIVFTDSAAAKVADLIAEEGNPDLKLRVFVQGGGCSGFQYGFTFDEITNEDDTTMTKNGVSLLIDAMSYQYLVGAEIDYKEDLQGAQFVIKNPNATTTCGCGSSFSV.

3 residues coordinate iron-sulfur cluster: C49, C113, and C115.

This sequence belongs to the HesB/IscA family. In terms of assembly, homodimer. Requires iron-sulfur cluster as cofactor.

Its function is as follows. Required for insertion of 4Fe-4S clusters. This Paracidovorax citrulli (strain AAC00-1) (Acidovorax citrulli) protein is Putative iron-sulfur cluster insertion protein ErpA.